Reading from the N-terminus, the 153-residue chain is Nucleoside diphosphate kinase (153 aa).

Lys13, Phe61, Arg89, Thr95, Arg106, and Asn116 together coordinate ATP. His119 functions as the Pros-phosphohistidine intermediate in the catalytic mechanism.

The protein belongs to the NDK family. Mg(2+) is required as a cofactor. As to expression, highest levels in the liver and kidney with lower levels in the heart, brain and breast muscle.

The protein resides in the cytoplasm. It is found in the cell membrane. The enzyme catalyses a 2'-deoxyribonucleoside 5'-diphosphate + ATP = a 2'-deoxyribonucleoside 5'-triphosphate + ADP. The catalysed reaction is a ribonucleoside 5'-diphosphate + ATP = a ribonucleoside 5'-triphosphate + ADP. In terms of biological role, major role in the synthesis of nucleoside triphosphates other than ATP. The ATP gamma phosphate is transferred to the NDP beta phosphate via a ping-pong mechanism, using a phosphorylated active-site intermediate. This Columba livia (Rock dove) protein is Nucleoside diphosphate kinase.